We begin with the raw amino-acid sequence, 484 residues long: Fumigaclavine B O-acetyltransferase ifgI (484 aa).

It belongs to the fumigaclavine B O-acetyltransferase family. As to quaternary structure, monomer.

The enzyme catalyses fumigaclavine B + acetyl-CoA = fumigaclavine A + CoA. It functions in the pathway alkaloid biosynthesis; ergot alkaloid biosynthesis. Functionally, fumigaclavine B O-acetyltransferase; part of the gene cluster that mediates the biosynthesis of isofumigaclavines, fungal ergot alkaloids. The tryptophan dimethylallyltransferase ifgA catalyzes the first step of ergot alkaloid biosynthesis by condensing dimethylallyl diphosphate (DMAP) and tryptophan to form 4-dimethylallyl-L-tryptophan. The second step is catalyzed by the methyltransferase ifgB that methylates 4-dimethylallyl-L-tryptophan in the presence of S-adenosyl-L-methionine, resulting in the formation of N-methyl-dimethylallyl-L-tryptophan. The catalase ifgD and the FAD-dependent oxidoreductase ifgC then transform N-methyl-dimethylallyl-L-tryptophan to chanoclavine-I which is further oxidized by ifgE in the presence of NAD(+), resulting in the formation of chanoclavine-I aldehyde. The chanoclavine-I aldehyde reductases ifgG and/or fgaOx3 reduce chanoclavine-I aldehyde to dihydrochanoclavine-I aldehyde that spontaneously dehydrates to form 6,8-dimethyl-6,7-didehydroergoline. The festuclavine dehydrogenases ifgF1 and/or ifgF2 then catalyze the reduction of 6,8-dimethyl-6,7-didehydroergoline to form festuclavine. Hydrolysis of festuclavine by a yet undetermined cytochrome P450 monooxygenase (called ifgH) then leads to the formation of isofumigaclavine B which is in turn acetylated by ifgI to isofumigaclavine A. Penicillium roqueforti has interestingly at least two sets of genes for the consumption of chanoclavine-I aldehyde on three different loci, the OYEs ifgG/fgaOx3 and the festuclavine synthase homologs ifgF1/ifgF2. The reason for the duplication of these genes is unclear, probably to ensure the conversion of chanoclavine-I aldehyde by differential gene expression under various environmental conditions. In Penicillium roqueforti (strain FM164), this protein is Fumigaclavine B O-acetyltransferase ifgI.